Here is a 173-residue protein sequence, read N- to C-terminus: Ribosome maturation factor RimM (173 aa).

The region spanning 94–173 is the PRC barrel domain; sequence EGEFYWRDLI…TIEVDWDPGF (80 aa).

It belongs to the RimM family. Binds ribosomal protein uS19.

Its subcellular location is the cytoplasm. An accessory protein needed during the final step in the assembly of 30S ribosomal subunit, possibly for assembly of the head region. Essential for efficient processing of 16S rRNA. May be needed both before and after RbfA during the maturation of 16S rRNA. It has affinity for free ribosomal 30S subunits but not for 70S ribosomes. This chain is Ribosome maturation factor RimM, found in Aeromonas salmonicida (strain A449).